The sequence spans 217 residues: Harpin secretion protein HrcR (217 aa).

A run of 4 helical transmembrane segments spans residues 11–31 (FALFLGALSLIPMLMIVCTCF), 52–72 (PNMALYGIALAATLFVMAPVF), 158–178 (IGFLIYIPFIVIDLIVSNVLL), and 185–205 (VAPMTLSLPLKMLLFVLINGW).

It belongs to the FliP/MopC/SpaP family.

It is found in the cell membrane. In terms of biological role, required for the secretion of harpin. This is Harpin secretion protein HrcR (hrcR) from Erwinia amylovora (Fire blight bacteria).